Reading from the N-terminus, the 134-residue chain is Ribonuclease VapC1 (134 aa).

Residues 3–132 (YMLDTNIIIY…RITDLQWQDW (130 aa)) enclose the PINc domain. Asp6 and Asp99 together coordinate Mg(2+).

Belongs to the PINc/VapC protein family. It depends on Mg(2+) as a cofactor.

Functionally, toxic component of a type II toxin-antitoxin (TA) system. Acts as an RNase, its toxic effect is neutralized by VapB1 antitoxin. In Haemophilus influenzae (strain ATCC 51907 / DSM 11121 / KW20 / Rd), this protein is Ribonuclease VapC1.